The sequence spans 651 residues: Endo-1,4-beta-xylanase A (651 aa).

The signal sequence occupies residues 1–30 (MKRKVKKMAAMATSIIMAIMIILHSIPVLA). The region spanning 33–227 (IIYDNETGTH…SSGYANVYKN (195 aa)) is the GH11 domain. Residue E124 is the Nucleophile of the active site. The active-site Proton donor is E214. CBM6 domains lie at 250 to 370 (SIIE…FIFS), 387 to 507 (SIIQ…FVFT), and 527 to 647 (SNIQ…FVFS). Positions 253 and 255 each coordinate Ca(2+). T270 provides a ligand contact to D-xylotriose. R275 is a binding site for Ca(2+). Repeat 1 spans residues 278–339 (GYIENGNTVT…SSTGSWNTYQ (62 aa)). The 3 X 61 AA approximate repeats stretch occupies residues 278–616 (GYIENGNTVT…GSTGSFDTYR (339 aa)). Y279, N336, and N363 together coordinate D-xylotriose. Residues Y279, N336, and N363 each coordinate D-xylobiose. D365 is a Ca(2+) binding site. The stretch at 415–476 (GYIENGYSTT…PSTNSWDSYQ (62 aa)) is repeat 2. The Ca(2+) site is built by Q530, E532, and S552. Residues 555-616 (GYIENGYSTT…GSTGSFDTYR (62 aa)) form repeat 3. Residues Y556, D613, and N640 each contribute to the D-xylotriose site. D642 provides a ligand contact to Ca(2+).

The protein belongs to the glycosyl hydrolase 11 (cellulase G) family.

It is found in the secreted. It catalyses the reaction Endohydrolysis of (1-&gt;4)-beta-D-xylosidic linkages in xylans.. It participates in glycan degradation; xylan degradation. In terms of biological role, endoxylanase that degrades arabinoxylan and glucuronoxylan to xylobiose and xylotriose (in vitro). The chain is Endo-1,4-beta-xylanase A (xynA) from Thermoclostridium stercorarium (Clostridium stercorarium).